Consider the following 256-residue polypeptide: N-acetylglucosaminyldiphosphoundecaprenol N-acetyl-beta-D-mannosaminyltransferase (256 aa).

Belongs to the glycosyltransferase 26 family. TagA/TarA subfamily.

It catalyses the reaction UDP-N-acetyl-alpha-D-mannosamine + N-acetyl-alpha-D-glucosaminyl-di-trans,octa-cis-undecaprenyl diphosphate = N-acetyl-beta-D-mannosaminyl-(1-&gt;4)-N-acetyl-alpha-D-glucosaminyl di-trans,octa-cis-undecaprenyl diphosphate + UDP + H(+). It functions in the pathway cell wall biogenesis; poly(glycerol phosphate) teichoic acid biosynthesis. In terms of biological role, catalyzes the conversion of GlcNAc-PP-undecaprenol into ManNAc-GlcNAc-PP-undecaprenol, the first committed lipid intermediate in the de novo synthesis of teichoic acid. This Bacillus subtilis (strain 168) protein is N-acetylglucosaminyldiphosphoundecaprenol N-acetyl-beta-D-mannosaminyltransferase.